A 628-amino-acid polypeptide reads, in one-letter code: UvrABC system protein C (628 aa).

Residues 20–99 form the GIY-YIG domain; it reads TSAGVYLMRD…IKTHKPRYNV (80 aa). The UVR domain maps to 209-244; the sequence is AELLAQLEDQMQTAAAAMNFEHAARLRDRITGLNQL.

The protein belongs to the UvrC family. As to quaternary structure, interacts with UvrB in an incision complex.

The protein resides in the cytoplasm. The UvrABC repair system catalyzes the recognition and processing of DNA lesions. UvrC both incises the 5' and 3' sides of the lesion. The N-terminal half is responsible for the 3' incision and the C-terminal half is responsible for the 5' incision. The protein is UvrABC system protein C of Gloeobacter violaceus (strain ATCC 29082 / PCC 7421).